The chain runs to 156 residues: Rhombotin-1 (156 aa).

LIM zinc-binding domains follow at residues 22 to 84 (KGCA…LFGT) and 86 to 148 (GNCA…GHLN).

In terms of tissue distribution, expressed in the brain and not in the thymus.

It is found in the nucleus. In terms of biological role, may be involved in gene regulation within neural lineage cells potentially by direct DNA binding or by binding to other transcription factors. This is Rhombotin-1 (Lmo1) from Mus musculus (Mouse).